The primary structure comprises 93 residues: UPF0358 protein RBAM_014700 (93 aa).

Belongs to the UPF0358 family.

This Bacillus velezensis (strain DSM 23117 / BGSC 10A6 / LMG 26770 / FZB42) (Bacillus amyloliquefaciens subsp. plantarum) protein is UPF0358 protein RBAM_014700.